A 75-amino-acid chain; its full sequence is Tetrahydromethanopterin S-methyltransferase subunit F (75 aa).

Residues F53–L73 traverse the membrane as a helical segment.

Belongs to the MtrF family. The complex is composed of 8 subunits; MtrA, MtrB, MtrC, MtrD, MtrE, MtrF, MtrG and MtrH.

It localises to the cell membrane. It catalyses the reaction 5-methyl-5,6,7,8-tetrahydromethanopterin + coenzyme M + 2 Na(+)(in) = 5,6,7,8-tetrahydromethanopterin + methyl-coenzyme M + 2 Na(+)(out). It participates in one-carbon metabolism; methanogenesis from CO(2); methyl-coenzyme M from 5,10-methylene-5,6,7,8-tetrahydromethanopterin: step 2/2. Part of a complex that catalyzes the formation of methyl-coenzyme M and tetrahydromethanopterin from coenzyme M and methyl-tetrahydromethanopterin. This is an energy-conserving, sodium-ion translocating step. This is Tetrahydromethanopterin S-methyltransferase subunit F from Methanopyrus kandleri (strain AV19 / DSM 6324 / JCM 9639 / NBRC 100938).